Consider the following 233-residue polypeptide: Large ribosomal subunit protein uL1 (233 aa).

Belongs to the universal ribosomal protein uL1 family. In terms of assembly, part of the 50S ribosomal subunit.

Its function is as follows. Binds directly to 23S rRNA. The L1 stalk is quite mobile in the ribosome, and is involved in E site tRNA release. Functionally, protein L1 is also a translational repressor protein, it controls the translation of the L11 operon by binding to its mRNA. This Syntrophomonas wolfei subsp. wolfei (strain DSM 2245B / Goettingen) protein is Large ribosomal subunit protein uL1.